Here is a 158-residue protein sequence, read N- to C-terminus: MSIEGVLEQGFVTTKADQLINYMRTGSMWPMTFGLACCAVEMMQAGASRYDLDRFGIVFRPSPRQSDVMIVAGTLCNKMAPALRKVYDQMAEPRWVISMGSCANGGGYYHYSYSVVRGCDRIVPVDIYVPGCPPTAEALIFGIIQLQKKIRRTNTIAR.

Positions 37, 38, 102, and 132 each coordinate [4Fe-4S] cluster.

It belongs to the complex I 20 kDa subunit family. NDH-1 is composed of 14 different subunits. Subunits NuoB, C, D, E, F, and G constitute the peripheral sector of the complex. It depends on [4Fe-4S] cluster as a cofactor.

It localises to the cell inner membrane. The enzyme catalyses a quinone + NADH + 5 H(+)(in) = a quinol + NAD(+) + 4 H(+)(out). Functionally, NDH-1 shuttles electrons from NADH, via FMN and iron-sulfur (Fe-S) centers, to quinones in the respiratory chain. The immediate electron acceptor for the enzyme in this species is believed to be ubiquinone. Couples the redox reaction to proton translocation (for every two electrons transferred, four hydrogen ions are translocated across the cytoplasmic membrane), and thus conserves the redox energy in a proton gradient. This Thiobacillus denitrificans (strain ATCC 25259 / T1) protein is NADH-quinone oxidoreductase subunit B.